Reading from the N-terminus, the 257-residue chain is uncharacterized protein (257 aa).

A helical transmembrane segment spans residues 6-26 (IFWLNLAAIIIISIVVSGDMF).

Belongs to the staphylococcal tandem lipoprotein family.

It is found in the cell membrane. This is an uncharacterized protein from Staphylococcus aureus (strain COL).